Reading from the N-terminus, the 416-residue chain is Enterobactin exporter EntS (416 aa).

Topologically, residues 1-21 are cytoplasmic; the sequence is MNKQSWLLNLSLLKTHPAFRA. Residues 22–42 traverse the membrane as a helical segment; that stretch reads VFLARFISIVSLGLLGVAVPV. At 43-55 the chain is on the periplasmic side; that stretch reads QIQMMTHSTWQVG. The chain crosses the membrane as a helical span at residues 56–76; it reads LSVTLTGGAMFVGLMVGGVLA. At 77–83 the chain is on the cytoplasmic side; that stretch reads DRYERKK. The helical transmembrane segment at 84–104 threads the bilayer; that stretch reads VILLARGTCGIGFIGLCLNAL. The Periplasmic portion of the chain corresponds to 105–109; sequence LPEPS. A helical membrane pass occupies residues 110 to 130; it reads LLAIYLLGLWDGFFASLGVTA. Residues 131-156 are Cytoplasmic-facing; sequence LLAATPALVGRENLMQAGAITMLTVR. Residues 157–177 traverse the membrane as a helical segment; it reads LGSVISPMIGGLLLATGGVAW. Asn178 is a topological domain (periplasmic). The helical transmembrane segment at 179-199 threads the bilayer; the sequence is YGLAAAGTFITLLPLLSLPAL. Over 200 to 218 the chain is Cytoplasmic; the sequence is PPPPQPREHPLKSLLAGFR. Residues 219–239 form a helical membrane-spanning segment; sequence FLLASPLVGGIALLGGLLTMA. Over 240-256 the chain is Periplasmic; the sequence is SAVRVLYPALADNWQMS. The helical transmembrane segment at 257–277 threads the bilayer; sequence AAQIGFLYAAIPLGAAIGALT. The Cytoplasmic segment spans residues 278-287; that stretch reads SGKLAHSARP. Residues 288–307 traverse the membrane as a helical segment; sequence GLLMLLSTLGSFLAIGLFGL. Topologically, residues 308 to 313 are periplasmic; the sequence is MPMWIL. The chain crosses the membrane as a helical span at residues 314 to 336; it reads GVVCLALFGWLSAVSSLLQYTML. The Cytoplasmic segment spans residues 337-356; sequence QTQTPEAMLGRINGLWTAQN. The chain crosses the membrane as a helical span at residues 357–377; it reads VTGDAIGAALLGGLGAMMTPV. Residue Ala378 is a topological domain, periplasmic. Residues 379–399 form a helical membrane-spanning segment; that stretch reads SASASGFGLLIIGVLLLLVLV. Topologically, residues 400 to 416 are cytoplasmic; it reads ELRRFRQTPPQMTASDS.

It belongs to the major facilitator superfamily. EntS (TC 2.A.1.38) family.

It is found in the cell inner membrane. Its function is as follows. Component of an export pathway for enterobactin. The chain is Enterobactin exporter EntS from Escherichia coli O7:K1 (strain IAI39 / ExPEC).